Consider the following 303-residue polypeptide: Ferrochelatase (303 aa).

Fe cation-binding residues include His-185 and Glu-262.

This sequence belongs to the ferrochelatase family.

The protein resides in the cytoplasm. The catalysed reaction is heme b + 2 H(+) = protoporphyrin IX + Fe(2+). The protein operates within porphyrin-containing compound metabolism; protoheme biosynthesis; protoheme from protoporphyrin-IX: step 1/1. Its function is as follows. Catalyzes the ferrous insertion into protoporphyrin IX. The protein is Ferrochelatase of Campylobacter jejuni subsp. jejuni serotype O:2 (strain ATCC 700819 / NCTC 11168).